A 218-amino-acid polypeptide reads, in one-letter code: MDKSESTSAGRNRRRRPRRGSRSASSSADANFRVLSQQLSRLNKTLAAGRPTINHPTFVGSERCRPGYTFTSITLKPPKIDRGSYYGKRLLLPDSVTEYDKKLVSRIQIRVNPLPKFDSTVWVTVRKVLASSDLSVAAISAMFADGASPVLVYQYAASGVQANNKLLYDLSAMRADIGDMRKYAILVYSKDDALETDELVLHVDIEHQRIPTSGVLPV.

Met-1 is modified (N-acetylmethionine; by host). The span at 1-10 (MDKSESTSAG) shows a compositional bias: low complexity. Residues 1–30 (MDKSESTSAGRNRRRRPRRGSRSASSSADA) are disordered. Positions 11–21 (RNRRRRPRRGS) are enriched in basic residues.

This sequence belongs to the cucumovirus capsid protein family.

The protein resides in the virion. Capsid protein. Probably binds RNA and plays a role in packaging. The protein is Capsid protein of Cucumber mosaic virus (strain P6) (CMV).